The sequence spans 544 residues: Methionine--tRNA ligase 2 (544 aa).

A 'HIGH' region motif is present at residues 10-20 (PYANGSLHLGH). Residues Cys-141, Cys-144, Cys-153, and Cys-156 each contribute to the Zn(2+) site. Residues 329–333 (KLSTS) carry the 'KMSKS' region motif. Thr-332 is an ATP binding site.

It belongs to the class-I aminoacyl-tRNA synthetase family. MetG type 1 subfamily. Monomer. Zn(2+) is required as a cofactor.

The protein localises to the cytoplasm. The catalysed reaction is tRNA(Met) + L-methionine + ATP = L-methionyl-tRNA(Met) + AMP + diphosphate. Is required not only for elongation of protein synthesis but also for the initiation of all mRNA translation through initiator tRNA(fMet) aminoacylation. This chain is Methionine--tRNA ligase 2, found in Bacillus cereus (strain ATCC 14579 / DSM 31 / CCUG 7414 / JCM 2152 / NBRC 15305 / NCIMB 9373 / NCTC 2599 / NRRL B-3711).